Here is a 367-residue protein sequence, read N- to C-terminus: Carbamoyl phosphate synthase small chain (367 aa).

The CPSase stretch occupies residues 1–182; it reads MKLENKKGYL…PIFHPNTGDM (182 aa). Residues S50, G230, and G232 each contribute to the L-glutamine site. A Glutamine amidotransferase type-1 domain is found at 182-367; it reads MIVVVDCGIK…DKFRTMVTGK (186 aa). The active-site Nucleophile is the C258. L-glutamine contacts are provided by L259, Q262, N300, G302, and Y303. Active-site residues include H343 and E345.

The protein belongs to the CarA family. In terms of assembly, composed of two chains; the small (or glutamine) chain promotes the hydrolysis of glutamine to ammonia, which is used by the large (or ammonia) chain to synthesize carbamoyl phosphate. Tetramer of heterodimers (alpha,beta)4.

The enzyme catalyses hydrogencarbonate + L-glutamine + 2 ATP + H2O = carbamoyl phosphate + L-glutamate + 2 ADP + phosphate + 2 H(+). It catalyses the reaction L-glutamine + H2O = L-glutamate + NH4(+). It participates in amino-acid biosynthesis; L-arginine biosynthesis; carbamoyl phosphate from bicarbonate: step 1/1. The protein operates within pyrimidine metabolism; UMP biosynthesis via de novo pathway; (S)-dihydroorotate from bicarbonate: step 1/3. Its function is as follows. Small subunit of the glutamine-dependent carbamoyl phosphate synthetase (CPSase). CPSase catalyzes the formation of carbamoyl phosphate from the ammonia moiety of glutamine, carbonate, and phosphate donated by ATP, constituting the first step of 2 biosynthetic pathways, one leading to arginine and/or urea and the other to pyrimidine nucleotides. The small subunit (glutamine amidotransferase) binds and cleaves glutamine to supply the large subunit with the substrate ammonia. The chain is Carbamoyl phosphate synthase small chain from Saccharolobus solfataricus (strain ATCC 35092 / DSM 1617 / JCM 11322 / P2) (Sulfolobus solfataricus).